The sequence spans 443 residues: Histidine--tRNA ligase (443 aa).

Residues 1 to 20 (MTESEKKQQKPQKAKAEKFK) are compositionally biased toward basic and acidic residues. Residues 1-21 (MTESEKKQQKPQKAKAEKFKA) are disordered.

The protein belongs to the class-II aminoacyl-tRNA synthetase family. In terms of assembly, homodimer.

It is found in the cytoplasm. It carries out the reaction tRNA(His) + L-histidine + ATP = L-histidyl-tRNA(His) + AMP + diphosphate + H(+). This Corynebacterium jeikeium (strain K411) protein is Histidine--tRNA ligase.